The primary structure comprises 1375 residues: Patatin-like phospholipase domain-containing protein 6 (1375 aa).

The interval 1 to 20 (MEAPLQTGMMGTSSHGLATN) is disordered. At 1-59 (MEAPLQTGMMGTSSHGLATNSSGAKVAERDGFQDVLAPGEGSAGRICGAQPVPFVPQVL) the chain is on the lumenal side. Polar residues predominate over residues 9-20 (MMGTSSHGLATN). N-linked (GlcNAc...) asparagine glycosylation is present at Asn-20. Residues 60-80 (GVMIGAGVAVVVTAVLILLVV) form a helical membrane-spanning segment. The Cytoplasmic portion of the chain corresponds to 81-1375 (RRLRVPKTPA…QEPPGSATDA (1295 aa)). 195–322 (VLGHFEKPLF…VRVVQIIMVR (128 aa)) provides a ligand contact to a nucleoside 3',5'-cyclic phosphate. Disordered stretches follow at residues 352–436 (FPSP…RSDF) and 449–472 (LQEE…PREQ). Ser-354 carries the post-translational modification Phosphoserine. The span at 359–376 (TRTSPVRGSKRMVSTSAT) shows a compositional bias: polar residues. The residue at position 361 (Thr-361) is a Phosphothreonine. 2 positions are modified to phosphoserine: Ser-362 and Ser-372. Pro residues predominate over residues 384–398 (GRPPDPTGAPLPGPT). Residue Ser-420 is modified to Phosphoserine. Thr-464 is modified (phosphothreonine). Residues 511-633 (ELAK…VAAR) and 629-749 (TVAA…LSQK) each bind a nucleoside 3',5'-cyclic phosphate. The PNPLA domain occupies 981-1147 (LVLGGGGARG…INNLPADIAR (167 aa)). Positions 985-990 (GGGARG) match the GXGXXG motif. Positions 1012–1016 (GTSIG) match the GXSXG motif. Ser-1014 acts as the Nucleophile in catalysis. The active-site Proton acceptor is the Asp-1134. The short motif at 1134-1136 (DGG) is the DGA/G element. Residues 1306-1375 (SYVSDGCADG…QEPPGSATDA (70 aa)) are disordered. Residues 1313–1329 (ADGEESDCLTEYEEDAG) show a composition bias toward acidic residues.

Belongs to the NTE family. In terms of processing, glycosylated. As to expression, expressed in brain, placenta, kidney, neuron and skeletal muscle. Expressed in the developing eye, pituitary and brain.

It is found in the endoplasmic reticulum membrane. The catalysed reaction is a 1-acyl-sn-glycero-3-phosphocholine + H2O = sn-glycerol 3-phosphocholine + a fatty acid + H(+). It catalyses the reaction 1-(9Z-octadecenoyl)-sn-glycero-3-phosphocholine + H2O = sn-glycerol 3-phosphocholine + (9Z)-octadecenoate + H(+). It carries out the reaction 1-hexadecanoylglycerol + H2O = glycerol + hexadecanoate + H(+). The enzyme catalyses 2-hexadecanoylglycerol + H2O = glycerol + hexadecanoate + H(+). The catalysed reaction is 1-(9Z-octadecenoyl)-glycerol + H2O = glycerol + (9Z)-octadecenoate + H(+). It catalyses the reaction 2-(9Z-octadecenoyl)-glycerol + H2O = glycerol + (9Z)-octadecenoate + H(+). It carries out the reaction 2-(5Z,8Z,11Z,14Z-eicosatetraenoyl)-glycerol + H2O = glycerol + (5Z,8Z,11Z,14Z)-eicosatetraenoate + H(+). The enzyme catalyses 1-hexadecanoyl-sn-glycero-3-phosphate + H2O = sn-glycerol 3-phosphate + hexadecanoate + H(+). The catalysed reaction is 1-hexadecanoyl-sn-glycero-3-phosphocholine + H2O = sn-glycerol 3-phosphocholine + hexadecanoate + H(+). With respect to regulation, inhibited by a series a OPs such as mipafox (MPX), phenyl saligenin phosphate (PSP), phenyl dipentyl phosphinate (PDPP), diisopropyl fluorophosphate and paraoxon. Phospholipase B that deacylates intracellular phosphatidylcholine (PtdCho), generating glycerophosphocholine (GroPtdCho). This deacylation occurs at both sn-2 and sn-1 positions of PtdCho. Catalyzes the hydrolysis of several naturally occurring membrane-associated lipids. Hydrolyzes lysophospholipids and monoacylglycerols, preferring the 1-acyl to the 2-acyl isomer. Does not catalyze hydrolysis of di- or triacylglycerols or fatty acid amides. This Homo sapiens (Human) protein is Patatin-like phospholipase domain-containing protein 6.